Reading from the N-terminus, the 216-residue chain is Uridine kinase (216 aa).

16–23 (GASASGKS) is a binding site for ATP.

The protein belongs to the uridine kinase family.

It localises to the cytoplasm. The catalysed reaction is uridine + ATP = UMP + ADP + H(+). It carries out the reaction cytidine + ATP = CMP + ADP + H(+). The protein operates within pyrimidine metabolism; CTP biosynthesis via salvage pathway; CTP from cytidine: step 1/3. Its pathway is pyrimidine metabolism; UMP biosynthesis via salvage pathway; UMP from uridine: step 1/1. This is Uridine kinase from Pasteurella multocida (strain Pm70).